We begin with the raw amino-acid sequence, 540 residues long: Glucose-6-phosphate isomerase (540 aa).

Glutamate 346 functions as the Proton donor in the catalytic mechanism. Catalysis depends on residues histidine 377 and lysine 505.

This sequence belongs to the GPI family.

The protein resides in the cytoplasm. It catalyses the reaction alpha-D-glucose 6-phosphate = beta-D-fructose 6-phosphate. Its pathway is carbohydrate biosynthesis; gluconeogenesis. It functions in the pathway carbohydrate degradation; glycolysis; D-glyceraldehyde 3-phosphate and glycerone phosphate from D-glucose: step 2/4. Catalyzes the reversible isomerization of glucose-6-phosphate to fructose-6-phosphate. This Francisella philomiragia subsp. philomiragia (strain ATCC 25017 / CCUG 19701 / FSC 153 / O#319-036) protein is Glucose-6-phosphate isomerase.